The chain runs to 180 residues: Riboflavin kinase (180 aa).

Residues Thr-40 and Asn-42 each coordinate Mg(2+). Catalysis depends on Glu-117, which acts as the Nucleophile.

The protein belongs to the flavokinase family. It depends on Zn(2+) as a cofactor. Mg(2+) serves as cofactor.

It carries out the reaction riboflavin + ATP = FMN + ADP + H(+). It functions in the pathway cofactor biosynthesis; FMN biosynthesis; FMN from riboflavin (ATP route): step 1/1. Functionally, catalyzes the phosphorylation of riboflavin (vitamin B2) to form flavin mononucleotide (FMN) coenzyme. This Meyerozyma guilliermondii (strain ATCC 6260 / CBS 566 / DSM 6381 / JCM 1539 / NBRC 10279 / NRRL Y-324) (Yeast) protein is Riboflavin kinase (FMN1).